A 404-amino-acid polypeptide reads, in one-letter code: Argininosuccinate synthase (404 aa).

ATP contacts are provided by residues 10 to 18 (AYSGGLDTS) and alanine 37. Positions 90 and 95 each coordinate L-citrulline. Residue glycine 120 participates in ATP binding. Positions 122, 126, and 127 each coordinate L-aspartate. Residue asparagine 126 participates in L-citrulline binding. Residues arginine 130, serine 181, serine 190, glutamate 266, and tyrosine 278 each contribute to the L-citrulline site.

The protein belongs to the argininosuccinate synthase family. Type 1 subfamily. In terms of assembly, homotetramer.

It is found in the cytoplasm. It catalyses the reaction L-citrulline + L-aspartate + ATP = 2-(N(omega)-L-arginino)succinate + AMP + diphosphate + H(+). The protein operates within amino-acid biosynthesis; L-arginine biosynthesis; L-arginine from L-ornithine and carbamoyl phosphate: step 2/3. The chain is Argininosuccinate synthase from Erythrobacter litoralis (strain HTCC2594).